The following is a 1469-amino-acid chain: Chromosome condensation protein dpy-27 (1469 aa).

The interval 1–25 (MQPFKRRALTSDDDRPYADTDSMPE) is disordered. Residues 9–18 (LTSDDDRPYA) show a composition bias toward basic and acidic residues. 122 to 129 (GPNGSGKS) contacts ATP. Residues 356 to 542 (ELEENKDIML…KGTLQTMMAE (187 aa)) are a coiled coil. The SMC hinge domain maps to 621 to 736 (PGFKGRLGDL…VDSLEEATRI (116 aa)). The disordered stretch occupies residues 758–781 (GALTGGGKPTTGRIRNDNNPNMSG). Coiled coils occupy residues 805-974 (LKLQ…AQLE), 1016-1056 (AYQT…DIIE), and 1159-1182 (TSAK…RMAR). The tract at residues 1404-1469 (LPEFNRFPPA…VQRRVRRSRH (66 aa)) is disordered. Positions 1439 to 1449 (EEEDEEDELIE) are enriched in acidic residues.

This sequence belongs to the SMC family. SMC4 subfamily. Component of the dosage compensation complex, which contains the mix-1/SMC2 and dpy-27/SMC4 heterodimer, and three non SMC subunits that probably regulate the complex: dpy-26, capg-1 and dpy-28. Within the complex, interacts with dpy-28, mix-1, dpy-26 and capg-1. Interacts with dpy-21. Interacts with dpy-28; the interaction is required for dpy-28 protein stability and dpy-28 association with the X chromosome. Interacts with smcl-1.

The protein localises to the nucleus. It is found in the chromosome. Central component of the condensin I-like dosage compensation complex that associates specifically with hermaphrodite X chromosomes to reduce their gene transcription throughout development. Its strong similarity with the condensin subunit smc4 suggests that it may reduce the X-chromosome transcript level by condensing the chromatin structure during interphase. Involved in the recruitment of the dosage compensation proteins mix-1 and dpy-21 to the X chromosome. Might be involved in the reduction of histone H4 lysine 16 acetylation (H4K16ac) on dosage compensated X chromosomes. As a member of the dosage compensation complex, also binds to regulatory regions of the autosomal her-1 gene, required for male development, possibly contributing to its repression in hermaphrodites. Also plays a role in the regulation of growth and body fat metabolism downstream of the TOR complex 2 pathway. The protein is Chromosome condensation protein dpy-27 (dpy-27) of Caenorhabditis elegans.